Reading from the N-terminus, the 435-residue chain is Adenylosuccinate synthetase (435 aa).

Residues 20-26 (GDEGKGK) and 48-50 (GHT) contribute to the GTP site. Asp-21 (proton acceptor) is an active-site residue. Mg(2+) is bound by residues Asp-21 and Gly-48. Residues 21-24 (DEGK), 46-49 (NAGH), Thr-134, Arg-148, Gln-229, Thr-244, and Arg-308 each bind IMP. His-49 acts as the Proton donor in catalysis. 304–310 (TTTGRPR) serves as a coordination point for substrate. GTP-binding positions include Arg-310, 336 to 338 (KVD), and 422 to 424 (SMG).

It belongs to the adenylosuccinate synthetase family. Homodimer. Mg(2+) serves as cofactor.

It localises to the cytoplasm. It carries out the reaction IMP + L-aspartate + GTP = N(6)-(1,2-dicarboxyethyl)-AMP + GDP + phosphate + 2 H(+). The protein operates within purine metabolism; AMP biosynthesis via de novo pathway; AMP from IMP: step 1/2. In terms of biological role, plays an important role in the de novo pathway of purine nucleotide biosynthesis. Catalyzes the first committed step in the biosynthesis of AMP from IMP. The sequence is that of Adenylosuccinate synthetase from Thermoplasma acidophilum (strain ATCC 25905 / DSM 1728 / JCM 9062 / NBRC 15155 / AMRC-C165).